Here is a 1350-residue protein sequence, read N- to C-terminus: Zinc finger protein Xfin (1350 aa).

The region spanning M1 to E58 is the KRAB domain. The tract at residues S47–D68 is disordered. 37 C2H2-type zinc fingers span residues H108–H130, H136–H158, Y164–H186, Y192–H214, Y220–H242, Y248–H270, F276–H298, Y326–H348, Y354–H376, Y382–H404, F410–H432, Y438–H460, Y466–H488, H503–H525, F531–H553, F559–H581, F587–H609, H615–H637, Y643–H665, Y671–H693, Y699–H721, Y750–H772, Y778–H800, Y806–H828, Y834–H856, Y862–H884, Y890–H912, Y918–H940, F988–H1010, Y1016–H1038, Y1044–H1066, Y1136–H1158, Y1164–H1186, Y1192–H1214, Y1220–H1242, Y1248–H1270, and Y1276–C1298.

This sequence belongs to the krueppel C2H2-type zinc-finger protein family. In terms of processing, phosphorylated. Phosphorylation enhances RNA binding. In terms of tissue distribution, expressed in oocytes, and in specialized cell types such as neural retina cones in adults.

The protein resides in the cytoplasm. Binds to poly-G sequences in RNA. May function in post-translational regulation processes. The protein is Zinc finger protein Xfin of Xenopus laevis (African clawed frog).